The following is a 349-amino-acid chain: Probable tRNA pseudouridine synthase B (349 aa).

Asp-41 serves as the catalytic Nucleophile. The PUA domain maps to 207–279 (YPKVIVKETA…KVIDIDNVLI (73 aa)). The span at 300-309 (IPVQKPERKL) shows a compositional bias: basic and acidic residues. A disordered region spans residues 300–349 (IPVQKPERKLHGNLQGSQEWKDTGNRGNPKRGGTGSKGFSSGFRKRKAKR).

This sequence belongs to the pseudouridine synthase TruB family. Type 2 subfamily.

The catalysed reaction is uridine(55) in tRNA = pseudouridine(55) in tRNA. In terms of biological role, could be responsible for synthesis of pseudouridine from uracil-55 in the psi GC loop of transfer RNAs. This is Probable tRNA pseudouridine synthase B from Picrophilus torridus (strain ATCC 700027 / DSM 9790 / JCM 10055 / NBRC 100828 / KAW 2/3).